The chain runs to 432 residues: Ribosomal protein uS12 methylthiotransferase RimO (432 aa).

An MTTase N-terminal domain is found at 4 to 120 (HNVFLLSLGC…LLQAIGAQYR (117 aa)). [4Fe-4S] cluster is bound by residues cysteine 13, cysteine 49, cysteine 83, cysteine 144, cysteine 148, and cysteine 151. The Radical SAM core domain maps to 130-359 (LTPPHISYLK…MELQETIAKE (230 aa)). One can recognise a TRAM domain in the interval 362-429 (QLFEGKELTV…AYELHGTITA (68 aa)).

It belongs to the methylthiotransferase family. RimO subfamily. The cofactor is [4Fe-4S] cluster.

The protein resides in the cytoplasm. The catalysed reaction is L-aspartate(89)-[ribosomal protein uS12]-hydrogen + (sulfur carrier)-SH + AH2 + 2 S-adenosyl-L-methionine = 3-methylsulfanyl-L-aspartate(89)-[ribosomal protein uS12]-hydrogen + (sulfur carrier)-H + 5'-deoxyadenosine + L-methionine + A + S-adenosyl-L-homocysteine + 2 H(+). Catalyzes the methylthiolation of an aspartic acid residue of ribosomal protein uS12. The chain is Ribosomal protein uS12 methylthiotransferase RimO from Chlorobium phaeobacteroides (strain DSM 266 / SMG 266 / 2430).